Consider the following 385-residue polypeptide: Queuine tRNA-ribosyltransferase (385 aa).

D93 serves as the catalytic Proton acceptor. Substrate is bound by residues 93 to 97 (DSGGF), D147, Q191, and G218. The RNA binding stretch occupies residues 249–255 (GVGKPED). The active-site Nucleophile is D268. The tract at residues 273-277 (TRNAR) is RNA binding; important for wobble base 34 recognition. C306, C308, C311, and H337 together coordinate Zn(2+).

It belongs to the queuine tRNA-ribosyltransferase family. As to quaternary structure, homodimer. Within each dimer, one monomer is responsible for RNA recognition and catalysis, while the other monomer binds to the replacement base PreQ1. The cofactor is Zn(2+).

It catalyses the reaction 7-aminomethyl-7-carbaguanine + guanosine(34) in tRNA = 7-aminomethyl-7-carbaguanosine(34) in tRNA + guanine. It participates in tRNA modification; tRNA-queuosine biosynthesis. In terms of biological role, catalyzes the base-exchange of a guanine (G) residue with the queuine precursor 7-aminomethyl-7-deazaguanine (PreQ1) at position 34 (anticodon wobble position) in tRNAs with GU(N) anticodons (tRNA-Asp, -Asn, -His and -Tyr). Catalysis occurs through a double-displacement mechanism. The nucleophile active site attacks the C1' of nucleotide 34 to detach the guanine base from the RNA, forming a covalent enzyme-RNA intermediate. The proton acceptor active site deprotonates the incoming PreQ1, allowing a nucleophilic attack on the C1' of the ribose to form the product. After dissociation, two additional enzymatic reactions on the tRNA convert PreQ1 to queuine (Q), resulting in the hypermodified nucleoside queuosine (7-(((4,5-cis-dihydroxy-2-cyclopenten-1-yl)amino)methyl)-7-deazaguanosine). The sequence is that of Queuine tRNA-ribosyltransferase from Pasteurella multocida (strain Pm70).